Reading from the N-terminus, the 197-residue chain is Imidazoleglycerol-phosphate dehydratase (197 aa).

Belongs to the imidazoleglycerol-phosphate dehydratase family.

It localises to the cytoplasm. It carries out the reaction D-erythro-1-(imidazol-4-yl)glycerol 3-phosphate = 3-(imidazol-4-yl)-2-oxopropyl phosphate + H2O. It participates in amino-acid biosynthesis; L-histidine biosynthesis; L-histidine from 5-phospho-alpha-D-ribose 1-diphosphate: step 6/9. The sequence is that of Imidazoleglycerol-phosphate dehydratase from Bradyrhizobium diazoefficiens (strain JCM 10833 / BCRC 13528 / IAM 13628 / NBRC 14792 / USDA 110).